The following is a 424-amino-acid chain: Histidine--tRNA ligase (424 aa).

It belongs to the class-II aminoacyl-tRNA synthetase family. Homodimer.

It is found in the cytoplasm. The catalysed reaction is tRNA(His) + L-histidine + ATP = L-histidyl-tRNA(His) + AMP + diphosphate + H(+). In Escherichia coli (strain 55989 / EAEC), this protein is Histidine--tRNA ligase.